A 335-amino-acid polypeptide reads, in one-letter code: Methionine import ATP-binding protein MetN 1 (335 aa).

One can recognise an ABC transporter domain in the interval 2 to 242; sequence IEFQQVHKTY…PQHPTTKRFV (241 aa). 38-45 contributes to the ATP binding site; that stretch reads GHSGAGKS.

It belongs to the ABC transporter superfamily. Methionine importer (TC 3.A.1.24) family. The complex is composed of two ATP-binding proteins (MetN), two transmembrane proteins (MetI) and a solute-binding protein (MetQ).

Its subcellular location is the cell inner membrane. It carries out the reaction L-methionine(out) + ATP + H2O = L-methionine(in) + ADP + phosphate + H(+). The enzyme catalyses D-methionine(out) + ATP + H2O = D-methionine(in) + ADP + phosphate + H(+). In terms of biological role, part of the ABC transporter complex MetNIQ involved in methionine import. Responsible for energy coupling to the transport system. In Pseudomonas putida (strain ATCC 47054 / DSM 6125 / CFBP 8728 / NCIMB 11950 / KT2440), this protein is Methionine import ATP-binding protein MetN 1.